Reading from the N-terminus, the 203-residue chain is Fucoxanthin-chlorophyll a-c binding protein, chloroplastic (203 aa).

The N-terminal 30 residues, 1–30 (MKLAIAALLAGSAAAFAPAQSGKASTALNM), are a transit peptide targeting the chloroplast.

The protein belongs to the fucoxanthin chlorophyll protein family. As to quaternary structure, the LHC complex of chromophytic algae is composed of fucoxanthin, chlorophyll A and C bound non-covalently by fucoxanthin chlorophyll proteins (FCPs). The ratio of pigments in this LHC is; fucoxanthin: chlorophyll C: chlorophyll A; (0.6-1): (0.1-0.3): (1).

The protein resides in the plastid. Its subcellular location is the chloroplast thylakoid membrane. Functionally, the light-harvesting complex (LHC) functions as a light receptor, it captures and delivers excitation energy to photosystems with which it is closely associated. Energy is transferred from the carotenoid and chlorophyll C (or B) to chlorophyll A and the photosynthetic reaction centers where it is used to synthesize ATP and reducing power. The chain is Fucoxanthin-chlorophyll a-c binding protein, chloroplastic (FCPA) from Trieres chinensis (Marine centric diatom).